The chain runs to 478 residues: Endoplasmic reticulum oxidoreductin-1 (478 aa).

An N-terminal signal peptide occupies residues 1–20; it reads MREPLLQLIVLSLIIIVVNT. 6 disulfides stabilise this stretch: Cys-28–Cys-41, Cys-30–Cys-39, Cys-79–Cys-384, Cys-88–Cys-93, Cys-209–Cys-230, and Cys-387–Cys-390. Positions 117–143 are disordered; that stretch reads AAVKEEEDDDAEKCADAGNNIDPMDRT. FAD contacts are provided by Arg-188, Thr-190, and Trp-201. Ser-241, His-244, Arg-283, and Arg-295 together coordinate FAD. N-linked (GlcNAc...) asparagine glycosylation occurs at Asn-377. Residues 459–478 are disordered; it reads ESVMNTAADGPPRKSNKIDL.

This sequence belongs to the EROs family. May function both as a monomer and a homodimer. The cofactor is FAD.

It localises to the endoplasmic reticulum membrane. Oxidoreductase involved in disulfide bond formation in the endoplasmic reticulum. Efficiently reoxidizes pdi-1, the enzyme catalyzing protein disulfide formation, in order to allow pdi-1 to sustain additional rounds of disulfide formation. Following pdi reoxidation, passes its electrons to molecular oxygen via FAD, leading to the production of reactive oxygen species (ROS) in the cell. In Caenorhabditis elegans, this protein is Endoplasmic reticulum oxidoreductin-1 (ero-1).